Here is a 157-residue protein sequence, read N- to C-terminus: Small ribosomal subunit protein uS7 (157 aa).

It belongs to the universal ribosomal protein uS7 family. Part of the 30S ribosomal subunit. Contacts proteins S9 and S11.

Its function is as follows. One of the primary rRNA binding proteins, it binds directly to 16S rRNA where it nucleates assembly of the head domain of the 30S subunit. Is located at the subunit interface close to the decoding center, probably blocks exit of the E-site tRNA. This is Small ribosomal subunit protein uS7 from Borrelia garinii subsp. bavariensis (strain ATCC BAA-2496 / DSM 23469 / PBi) (Borreliella bavariensis).